Consider the following 426-residue polypeptide: Tryptophan--tRNA ligase (426 aa).

Positions 66–74 match the 'HIGH' region motif; it reads PSGEMHLGN. A 'KMSKS' region motif is present at residues 314-318; it reads KMSSS.

It belongs to the class-I aminoacyl-tRNA synthetase family.

It localises to the cytoplasm. It catalyses the reaction tRNA(Trp) + L-tryptophan + ATP = L-tryptophyl-tRNA(Trp) + AMP + diphosphate + H(+). In Thermoplasma volcanium (strain ATCC 51530 / DSM 4299 / JCM 9571 / NBRC 15438 / GSS1), this protein is Tryptophan--tRNA ligase.